Here is a 372-residue protein sequence, read N- to C-terminus: Glutamate 5-kinase (372 aa).

Residue Lys14 participates in ATP binding. Substrate is bound by residues Ser54, Asp141, and Asn153. An ATP-binding site is contributed by 173–174 (TD). Positions 280-358 (AGAVVLDNGA…ADIAAILGFV (79 aa)) constitute a PUA domain.

This sequence belongs to the glutamate 5-kinase family.

Its subcellular location is the cytoplasm. It catalyses the reaction L-glutamate + ATP = L-glutamyl 5-phosphate + ADP. The protein operates within amino-acid biosynthesis; L-proline biosynthesis; L-glutamate 5-semialdehyde from L-glutamate: step 1/2. Functionally, catalyzes the transfer of a phosphate group to glutamate to form L-glutamate 5-phosphate. This chain is Glutamate 5-kinase, found in Janthinobacterium sp. (strain Marseille) (Minibacterium massiliensis).